The primary structure comprises 520 residues: GMP synthase [glutamine-hydrolyzing] (520 aa).

A Glutamine amidotransferase type-1 domain is found at 8-202 (RLLIIDFGSQ…FVRLAGFSGD (195 aa)). Residue cysteine 86 is the Nucleophile of the active site. Catalysis depends on residues histidine 177 and glutamate 179. Residues 203-395 (WTMGAYREQM…LGLPDSFIGR (193 aa)) form the GMPS ATP-PPase domain. 230–236 (SGGVDSS) serves as a coordination point for ATP.

Homodimer.

It catalyses the reaction XMP + L-glutamine + ATP + H2O = GMP + L-glutamate + AMP + diphosphate + 2 H(+). The protein operates within purine metabolism; GMP biosynthesis; GMP from XMP (L-Gln route): step 1/1. Its function is as follows. Catalyzes the synthesis of GMP from XMP. The sequence is that of GMP synthase [glutamine-hydrolyzing] from Ruegeria sp. (strain TM1040) (Silicibacter sp.).